The chain runs to 440 residues: UDP-glycosyltransferase 87A1 (440 aa).

UDP-alpha-D-glucose-binding positions include Ser263, 312-314, 329-337, and 351-354; these read CDQ, HCGYNSTLE, and FWDQ.

It belongs to the UDP-glycosyltransferase family.

The polypeptide is UDP-glycosyltransferase 87A1 (UGT87A1) (Arabidopsis thaliana (Mouse-ear cress)).